Here is a 175-residue protein sequence, read N- to C-terminus: Translation initiation factor IF-3 (175 aa).

The protein belongs to the IF-3 family. Monomer.

It is found in the cytoplasm. In terms of biological role, IF-3 binds to the 30S ribosomal subunit and shifts the equilibrium between 70S ribosomes and their 50S and 30S subunits in favor of the free subunits, thus enhancing the availability of 30S subunits on which protein synthesis initiation begins. The polypeptide is Translation initiation factor IF-3 (Staphylococcus aureus (strain NCTC 8325 / PS 47)).